Consider the following 441-residue polypeptide: Transcriptional regulatory protein ZraR (441 aa).

The region spanning aspartate 7–leucine 121 is the Response regulatory domain. A 4-aspartylphosphate modification is found at aspartate 56. In terms of domain architecture, Sigma-54 factor interaction spans methionine 141–valine 370. Positions 172, 173, 329, and 359 each coordinate ATP. Residues lysine 421 to serine 440 constitute a DNA-binding region (H-T-H motif).

Post-translationally, phosphorylated by ZraS.

It is found in the cytoplasm. Activity of the ZraS/ZraR two-component system is repressed by the zinc-bound form of ZraP, which probably interacts with the periplasmic region of ZraS. Its function is as follows. Part of the Zra signaling pathway, an envelope stress response (ESR) system composed of the periplasmic accessory protein ZraP, the histidine kinase ZraS and the transcriptional regulator ZraR. The ZraPSR system contributes to antibiotic resistance and is important for membrane integrity in the presence of membrane-targeting biocides. ZraR is a member of the two-component regulatory system ZraS/ZraR. When activated by ZraS, acts in conjunction with sigma-54 to regulate the expression of zraP in the presence of high Zn(2+) or Pb(2+) concentrations. Also positively autoregulates the expression of the zraSR operon. This is Transcriptional regulatory protein ZraR (zraR) from Salmonella typhi.